A 274-amino-acid chain; its full sequence is Penicillin-insensitive murein endopeptidase (274 aa).

Residues 1-19 form the signal peptide; the sequence is MNKTAIALLALLASSASLA. Cystine bridges form between Cys-44-Cys-265, Cys-187-Cys-235, and Cys-216-Cys-223. Zn(2+) is bound by residues His-110, His-113, Asp-120, Asp-147, His-150, and His-211. The disordered stretch occupies residues 228 to 264; the sequence is LPPPGDGCGAELQSWFAPPKPGTTKPEKKTPSPLPPS.

This sequence belongs to the peptidase M74 family. As to quaternary structure, dimer. It depends on Zn(2+) as a cofactor.

The protein localises to the periplasm. Murein endopeptidase that cleaves the D-alanyl-meso-2,6-diamino-pimelyl amide bond that connects peptidoglycan strands. Likely plays a role in the removal of murein from the sacculus. This Escherichia coli (strain 55989 / EAEC) protein is Penicillin-insensitive murein endopeptidase.